We begin with the raw amino-acid sequence, 427 residues long: V-type proton ATPase subunit C 2 (427 aa).

The interval 298-320 (PLGNPARPAAGQTDRDRESEGEG) is disordered.

It belongs to the V-ATPase C subunit family. V-ATPase is a heteromultimeric enzyme made up of two complexes: the ATP-hydrolytic V1 complex and the proton translocation V0 complex. The V1 complex consists of three catalytic AB heterodimers that form a heterohexamer, three peripheral stalks each consisting of EG heterodimers, one central rotor including subunits D and F, and the regulatory subunits C and H. The proton translocation complex V0 consists of the proton transport subunit a, a ring of proteolipid subunits c9c'', rotary subunit d, subunits e and f, and the accessory subunits ATP6AP1/Ac45 and ATP6AP2/PRR. As to expression, predominantly expressed in the lung and kidney. Isoform 1 is lung-specific while isoform 3 is a kidney-specific isoform. Isoform 1 is localized in the lamellar bodies of type II alveolar cells. Isoform 2 is strongly expressed in the cortical and medulla collecting ducts and is found in the plasma membranes of renal alpha and beta intercalated cells.

Functionally, subunit of the V1 complex of vacuolar(H+)-ATPase (V-ATPase), a multisubunit enzyme composed of a peripheral complex (V1) that hydrolyzes ATP and a membrane integral complex (V0) that translocates protons. V-ATPase is responsible for acidifying and maintaining the pH of intracellular compartments and in some cell types, is targeted to the plasma membrane, where it is responsible for acidifying the extracellular environment. Subunit C is necessary for the assembly of the catalytic sector of the enzyme and is likely to have a specific function in its catalytic activity. The sequence is that of V-type proton ATPase subunit C 2 (Atp6v1c2) from Mus musculus (Mouse).